A 469-amino-acid polypeptide reads, in one-letter code: Cytochrome P450 85A1 (469 aa).

A helical membrane pass occupies residues 1 to 21; it reads MVLVAIGVVVAAAVVVSSLLL. Residue Cys-419 participates in heme binding.

The protein belongs to the cytochrome P450 family. Heme is required as a cofactor. Expressed at low levels in all the tissues, but preferentially in the leaf sheath.

The protein localises to the membrane. The catalysed reaction is 6-deoxoteasterone + reduced [NADPH--hemoprotein reductase] + O2 = 6alpha-hydroxyteasterone + oxidized [NADPH--hemoprotein reductase] + H2O + H(+). It catalyses the reaction 6alpha-hydroxytyphasterol + reduced [NADPH--hemoprotein reductase] + O2 = teasterone + oxidized [NADPH--hemoprotein reductase] + 2 H2O + H(+). It carries out the reaction 3-dehydro-6-deoxoteasterone + reduced [NADPH--hemoprotein reductase] + O2 = 3-dehydro-6alpha-hydroxyteasterone + oxidized [NADPH--hemoprotein reductase] + H2O + H(+). The enzyme catalyses 3-dehydro-6alpha-hydroxyteasterone + reduced [NADPH--hemoprotein reductase] + O2 = 3-dehydroteasterone + oxidized [NADPH--hemoprotein reductase] + 2 H2O + H(+). The catalysed reaction is 6-deoxotyphasterol + reduced [NADPH--hemoprotein reductase] + O2 = 6alpha-hydroxytyphasterol + oxidized [NADPH--hemoprotein reductase] + H2O + H(+). It catalyses the reaction 6alpha-hydroxytyphasterol + reduced [NADPH--hemoprotein reductase] + O2 = typhasterol + oxidized [NADPH--hemoprotein reductase] + 2 H2O + H(+). It carries out the reaction 3-dehydro-6-deoxoteasterone + 2 reduced [NADPH--hemoprotein reductase] + 2 O2 = 3-dehydroteasterone + 2 oxidized [NADPH--hemoprotein reductase] + 3 H2O + 2 H(+). The enzyme catalyses 6-deoxoteasterone + 2 reduced [NADPH--hemoprotein reductase] + 2 O2 = teasterone + 2 oxidized [NADPH--hemoprotein reductase] + 3 H2O + 2 H(+). The catalysed reaction is 6-deoxotyphasterol + 2 reduced [NADPH--hemoprotein reductase] + 2 O2 = typhasterol + 2 oxidized [NADPH--hemoprotein reductase] + 3 H2O + 2 H(+). Its pathway is plant hormone biosynthesis; brassinosteroid biosynthesis. In terms of biological role, catalyzes the C6-oxidation step in brassinosteroids biosynthesis. May convert 6-deoxoteasterone (6-deoxoTE) to teasterone (TE), 3-dehydro-6-deoxoteasterone (6-deoxo3DT, 6-deoxo3DHT) to 3-dehydroteasterone (3DT, 3-DHT), and 6-deoxotyphasterol (6-deoxoTY) to typhasterol (TY). Involved in the organization and elongation of the leaf and stem cells. Not able to convert 6-deoxocastasterone (6-deoxoCS) and castasterone (CS) to brassinolide (BL). This chain is Cytochrome P450 85A1, found in Oryza sativa subsp. japonica (Rice).